The following is a 154-amino-acid chain: Transcriptional repressor NrdR (154 aa).

A zinc finger spans residues 3 to 34 (CPFCGHAATQVIDTRMSEEGDTVRRRRRCESC). An ATP-cone domain is found at 49–139 (PAVVKKNGSR…VYRSFEDLAE (91 aa)).

This sequence belongs to the NrdR family. Zn(2+) serves as cofactor.

In terms of biological role, negatively regulates transcription of bacterial ribonucleotide reductase nrd genes and operons by binding to NrdR-boxes. This Ralstonia pickettii (strain 12J) protein is Transcriptional repressor NrdR.